Reading from the N-terminus, the 864-residue chain is Carbohydrate-responsive element-binding protein (864 aa).

2 disordered regions span residues proline 15–leucine 41 and methionine 53–phenylalanine 77. Phosphoserine is present on residues serine 20, serine 23, and serine 25. Phosphothreonine is present on threonine 27. Serine 196 is subject to Phosphoserine. Disordered regions lie at residues serine 332–proline 397, proline 449–proline 468, proline 489–aspartate 533, proline 547–threonine 570, and proline 583–proline 602. Polar residues predominate over residues glycine 351 to serine 368. The segment covering alanine 513 to alanine 531 has biased composition (low complexity). At serine 566 the chain carries Phosphoserine; by AMPK. A compositionally biased stretch (pro residues) spans proline 583–proline 596. Phosphoserine occurs at positions 614, 626, and 643. A bHLH domain is found at asparagine 661–leucine 715. The interval leucine 715–leucine 736 is leucine-zipper.

As to quaternary structure, binds DNA as a heterodimer with TCFL4/MLX. Post-translationally, phosphorylation at Ser-566 by AMPK inactivates the DNA-binding activity. Expressed in the ventricular and intermediate zones of the developing spinal cord of 12.5 dpc embryos. In later embryos expressed in a variety of tissues.

The protein resides in the nucleus. Transcriptional repressor. Binds to the canonical and non-canonical E box sequences 5'-CACGTG-3'. The polypeptide is Carbohydrate-responsive element-binding protein (Mlxipl) (Mus musculus (Mouse)).